Consider the following 301-residue polypeptide: NAD kinase (301 aa).

The active-site Proton acceptor is Asp73. Residues 73-74 (DG), 151-152 (ND), Arg179, Asp181, 192-197 (TAYALS), Ala216, and Gln250 contribute to the NAD(+) site.

The protein belongs to the NAD kinase family. It depends on a divalent metal cation as a cofactor.

The protein localises to the cytoplasm. The catalysed reaction is NAD(+) + ATP = ADP + NADP(+) + H(+). Functionally, involved in the regulation of the intracellular balance of NAD and NADP, and is a key enzyme in the biosynthesis of NADP. Catalyzes specifically the phosphorylation on 2'-hydroxyl of the adenosine moiety of NAD to yield NADP. The sequence is that of NAD kinase from Methylibium petroleiphilum (strain ATCC BAA-1232 / LMG 22953 / PM1).